Consider the following 163-residue polypeptide: Putative 4-hydroxy-4-methyl-2-oxoglutarate aldolase (163 aa).

Substrate is bound by residues Gly76–Leu79 and Arg98. An a divalent metal cation-binding site is contributed by Asp99.

The protein belongs to the class II aldolase/RraA-like family. As to quaternary structure, homotrimer. It depends on a divalent metal cation as a cofactor.

It catalyses the reaction 4-hydroxy-4-methyl-2-oxoglutarate = 2 pyruvate. The enzyme catalyses oxaloacetate + H(+) = pyruvate + CO2. Its function is as follows. Catalyzes the aldol cleavage of 4-hydroxy-4-methyl-2-oxoglutarate (HMG) into 2 molecules of pyruvate. Also contains a secondary oxaloacetate (OAA) decarboxylase activity due to the common pyruvate enolate transition state formed following C-C bond cleavage in the retro-aldol and decarboxylation reactions. In Pseudomonas putida (strain ATCC 47054 / DSM 6125 / CFBP 8728 / NCIMB 11950 / KT2440), this protein is Putative 4-hydroxy-4-methyl-2-oxoglutarate aldolase.